The following is an 82-amino-acid chain: MPKVGVEQSLTAISEELRGMGYDVVQLKQEQDAQGCDCCVITGQDQNVMGIQNAVTQGAVINASGLTAEEVCQQVDQRLRQQ.

Belongs to the UPF0180 family.

The polypeptide is UPF0180 protein BH2667 (Halalkalibacterium halodurans (strain ATCC BAA-125 / DSM 18197 / FERM 7344 / JCM 9153 / C-125) (Bacillus halodurans)).